The following is a 363-amino-acid chain: Fructose-bisphosphate aldolase (363 aa).

Residues Arg56 and Lys147 each coordinate substrate. The active-site Proton acceptor is Glu188. Catalysis depends on Lys230, which acts as the Schiff-base intermediate with dihydroxyacetone-P.

Belongs to the class I fructose-bisphosphate aldolase family.

The catalysed reaction is beta-D-fructose 1,6-bisphosphate = D-glyceraldehyde 3-phosphate + dihydroxyacetone phosphate. It functions in the pathway carbohydrate degradation; glycolysis; D-glyceraldehyde 3-phosphate and glycerone phosphate from D-glucose: step 4/4. This Echinococcus multilocularis (Fox tapeworm) protein is Fructose-bisphosphate aldolase (FBPA).